The chain runs to 1217 residues: Splicing factor 3B subunit 3 (1217 aa).

2 interaction with PHF5A, SF3B1 and SF3B5 regions span residues E105–Q119 and N145–Y168. At S156 the chain carries Phosphoserine. 2 interaction with SF3B1 and SF3B5 regions span residues D193–H231 and R786–H804. Residues T1028–K1049 form an interaction with SF3B1 region. The interval T1100–S1123 is interaction with SF3B5. Residue T1200 is modified to Phosphothreonine.

The protein belongs to the RSE1 family. In terms of assembly, component of the 17S U2 SnRNP complex, a ribonucleoprotein complex that contains small nuclear RNA (snRNA) U2 and a number of specific proteins. Part of the SF3B subcomplex of the 17S U2 SnRNP complex. SF3B associates with the splicing subcomplex SF3A and a 12S RNA unit to form the U2 small nuclear ribonucleoproteins complex (U2 snRNP). Within the SF3B subcomplex, interacts directly with SF3B1 (via HEAT domain), SF3B5 and PHF5A. Identified in the spliceosome A complex; remains associated with the spliceosome throughout the splicing process. Component of the spliceosome B complex. Identified in the spliceosome C complex. Identified in the spliceosome E complex. Component of the minor (U12-type spliceosome) spliceosome. Within this complex, interacts with SCNM1. Associates with the STAGA transcription coactivator-HAT complex. Interacts with SUPT3H. Interacts with TAF3.

Its subcellular location is the nucleus. In terms of biological role, component of the 17S U2 SnRNP complex of the spliceosome, a large ribonucleoprotein complex that removes introns from transcribed pre-mRNAs. The 17S U2 SnRNP complex (1) directly participates in early spliceosome assembly and (2) mediates recognition of the intron branch site during pre-mRNA splicing by promoting the selection of the pre-mRNA branch-site adenosine, the nucleophile for the first step of splicing. Within the 17S U2 SnRNP complex, SF3B3 is part of the SF3B subcomplex, which is required for 'A' complex assembly formed by the stable binding of U2 snRNP to the branchpoint sequence in pre-mRNA. Sequence independent binding of SF3A and SF3B subcomplexes upstream of the branch site is essential, it may anchor U2 snRNP to the pre-mRNA. May also be involved in the assembly of the 'E' complex. Also acts as a component of the minor spliceosome, which is involved in the splicing of U12-type introns in pre-mRNAs. The protein is Splicing factor 3B subunit 3 (Sf3b3) of Mus musculus (Mouse).